The following is a 184-amino-acid chain: Photosystem I assembly protein Ycf4 (184 aa).

The next 2 membrane-spanning stretches (helical) occupy residues asparagine 21–tyrosine 43 and phenylalanine 68–serine 90.

This sequence belongs to the Ycf4 family.

It is found in the plastid. The protein localises to the chloroplast thylakoid membrane. In terms of biological role, seems to be required for the assembly of the photosystem I complex. The chain is Photosystem I assembly protein Ycf4 from Physcomitrium patens (Spreading-leaved earth moss).